The sequence spans 1011 residues: Protein FAM83B (1011 aa).

The interval 1–283 (METSSMLSSL…RTLYARSCVP (283 aa)) is DUF1669. Positions 1–284 (METSSMLSSL…TLYARSCVPS (284 aa)) are required for interaction with RAF1 and for the function. Ser-334, Ser-422, Ser-424, Ser-466, and Ser-543 each carry phosphoserine. The segment at 555–585 (EVNSCTTGSSNSTIIGSQGSETPKEVPDTPT) is disordered. Residues 557–574 (NSCTTGSSNSTIIGSQGS) are compositionally biased toward low complexity. Ser-664 bears the Phosphoserine mark. 2 disordered regions span residues 691–738 (NRVR…TKSV) and 750–769 (ESNK…SFLK). Residues 694 to 705 (RQPEKPKEDLLK) show a composition bias toward basic and acidic residues. 2 stretches are compositionally biased toward polar residues: residues 706–715 (SSKSMHNVTH) and 727–738 (RNSPSGTTTKSV). Residues 750 to 762 (ESNKELASKKEVK) are compositionally biased toward basic and acidic residues. Residue Thr-782 is modified to Phosphothreonine. Position 802 is a phosphoserine (Ser-802). Positions 807 to 928 (LVSEGEENQK…TSSELLRSHS (122 aa)) are disordered. Residues 813-828 (ENQKPKKSDTKVDSSP) are compositionally biased toward basic and acidic residues. Phosphoserine occurs at positions 852, 869, and 915. Over residues 913–923 (TSSPRPTSSEL) the composition is skewed to low complexity.

The protein belongs to the FAM83 family. Interacts with EGFR; positively regulates EGFR inducing its autophosphorylation in absence of stimulation by EGF. Interacts with RAF1; displaces 14-3-3 proteins from RAF1 and activates RAF1 within the RAS/MAPK signaling cascade. Interacts with AKT1, PIK3CA and PIK3R1; activates the PI3K/AKT signaling cascade. Directly interacts (via DUF1669) with casein kinase isoforms CSNK1A1, CSNK1A1L, CSNK1D and CSNK1E. Post-translationally, phosphorylated in vitro by CSNK1A1.

It localises to the cytoplasm. Its subcellular location is the membrane. Probable proto-oncogene that functions in the epidermal growth factor receptor/EGFR signaling pathway. Activates both the EGFR itself and downstream RAS/MAPK and PI3K/AKT/TOR signaling cascades. In Homo sapiens (Human), this protein is Protein FAM83B.